Reading from the N-terminus, the 313-residue chain is L-lactate dehydrogenase 1 (313 aa).

NAD(+)-binding residues include valine 15, aspartate 36, arginine 41, and tyrosine 66. Residues glutamine 83, arginine 89, and 121-124 (NPVD) contribute to the substrate site. Residues 119–121 (ASN) and serine 144 each bind NAD(+). Position 149–152 (149–152 (DTAR)) interacts with substrate. The beta-D-fructose 1,6-bisphosphate site is built by arginine 154 and histidine 169. The active-site Proton acceptor is histidine 176. Tyrosine 218 bears the Phosphotyrosine mark. Threonine 227 provides a ligand contact to substrate.

The protein belongs to the LDH/MDH superfamily. LDH family. Homotetramer.

The protein localises to the cytoplasm. It catalyses the reaction (S)-lactate + NAD(+) = pyruvate + NADH + H(+). Its pathway is fermentation; pyruvate fermentation to lactate; (S)-lactate from pyruvate: step 1/1. Its activity is regulated as follows. Allosterically activated by fructose 1,6-bisphosphate (FBP). In terms of biological role, catalyzes the conversion of lactate to pyruvate. In Listeria monocytogenes serotype 4b (strain F2365), this protein is L-lactate dehydrogenase 1.